A 265-amino-acid polypeptide reads, in one-letter code: uncharacterized protein (265 aa).

A signal peptide spans 1-20 (MSRAMALFFVLCWIQDEIVL). The chain crosses the membrane as a helical span at residues 192–212 (IIAAVSGVAILMAIVLLLLGL).

The protein resides in the membrane. This is an uncharacterized protein from Homo sapiens (Human).